Reading from the N-terminus, the 144-residue chain is Large ribosomal subunit protein uL13 (144 aa).

This sequence belongs to the universal ribosomal protein uL13 family. In terms of assembly, part of the 50S ribosomal subunit.

In terms of biological role, this protein is one of the early assembly proteins of the 50S ribosomal subunit, although it is not seen to bind rRNA by itself. It is important during the early stages of 50S assembly. The polypeptide is Large ribosomal subunit protein uL13 (Mesomycoplasma hyopneumoniae (strain 232) (Mycoplasma hyopneumoniae)).